A 664-amino-acid polypeptide reads, in one-letter code: Macrolide export ATP-binding/permease protein MacB (664 aa).

Residues 8–246 (LEVHNLVREF…ELNKDPDAAP (239 aa)) enclose the ABC transporter domain. Residue 44-51 (GQSGSGKS) coordinates ATP. Helical transmembrane passes span 287-307 (FLTMLGIIIGIASVVTVVALG), 543-563 (IAVISLIVGGIGVMNIMLVSV), 587-607 (FLIEAILVCLIGGVLGVLLSL), and 629-649 (SIVAAFVCSTLIGVVFGFLPA).

Belongs to the ABC transporter superfamily. Macrolide exporter (TC 3.A.1.122) family. Homodimer. Part of the tripartite efflux system MacAB-TolC, which is composed of an inner membrane transporter, MacB, a periplasmic membrane fusion protein, MacA, and an outer membrane component, TolC. The complex forms a large protein conduit and can translocate molecules across both the inner and outer membranes. Interacts with MacA.

Its subcellular location is the cell inner membrane. Its function is as follows. Part of the tripartite efflux system MacAB-TolC. MacB is a non-canonical ABC transporter that contains transmembrane domains (TMD), which form a pore in the inner membrane, and an ATP-binding domain (NBD), which is responsible for energy generation. Confers resistance against macrolides. The protein is Macrolide export ATP-binding/permease protein MacB of Acinetobacter baylyi (strain ATCC 33305 / BD413 / ADP1).